The following is a 109-amino-acid chain: UPF0060 membrane protein HEAR0108 (109 aa).

Transmembrane regions (helical) follow at residues 7–27 (VALF…PYLW), 33–53 (SIWL…LLSL), 63–83 (AAYG…VDGI), and 87–107 (NWDV…MFAP).

It belongs to the UPF0060 family.

It is found in the cell inner membrane. This Herminiimonas arsenicoxydans protein is UPF0060 membrane protein HEAR0108.